Here is a 277-residue protein sequence, read N- to C-terminus: Shikimate dehydrogenase (NADP(+)) (277 aa).

Shikimate contacts are provided by residues 15 to 17 (SLS) and T62. The Proton acceptor role is filled by K66. The shikimate site is built by N87 and D102. Residues 127–131 (GAGGA), 151–156 (NRTVDK), and I219 each bind NADP(+). Residue Y221 participates in shikimate binding. G242 is a binding site for NADP(+).

It belongs to the shikimate dehydrogenase family. In terms of assembly, homodimer.

It carries out the reaction shikimate + NADP(+) = 3-dehydroshikimate + NADPH + H(+). Its pathway is metabolic intermediate biosynthesis; chorismate biosynthesis; chorismate from D-erythrose 4-phosphate and phosphoenolpyruvate: step 4/7. Functionally, involved in the biosynthesis of the chorismate, which leads to the biosynthesis of aromatic amino acids. Catalyzes the reversible NADPH linked reduction of 3-dehydroshikimate (DHSA) to yield shikimate (SA). The protein is Shikimate dehydrogenase (NADP(+)) of Bacillus cereus (strain AH187).